Consider the following 238-residue polypeptide: 3-dehydroquinate dehydratase (238 aa).

Residues 35–37 (ELR) and R70 contribute to the 3-dehydroquinate site. Residue H133 is the Proton donor/acceptor of the active site. K160 serves as the catalytic Schiff-base intermediate with substrate. 2 residues coordinate 3-dehydroquinate: R202 and Q225.

The protein belongs to the type-I 3-dehydroquinase family. In terms of assembly, homodimer.

It catalyses the reaction 3-dehydroquinate = 3-dehydroshikimate + H2O. The protein operates within metabolic intermediate biosynthesis; chorismate biosynthesis; chorismate from D-erythrose 4-phosphate and phosphoenolpyruvate: step 3/7. Functionally, involved in the third step of the chorismate pathway, which leads to the biosynthesis of aromatic amino acids. Catalyzes the cis-dehydration of 3-dehydroquinate (DHQ) and introduces the first double bond of the aromatic ring to yield 3-dehydroshikimate. This is 3-dehydroquinate dehydratase from Staphylococcus aureus (strain MRSA252).